Reading from the N-terminus, the 1382-residue chain is DNA-directed RNA polymerase subunit beta (1382 aa).

It belongs to the RNA polymerase beta chain family. As to quaternary structure, the RNAP catalytic core consists of 2 alpha, 1 beta, 1 beta' and 1 omega subunit. When a sigma factor is associated with the core the holoenzyme is formed, which can initiate transcription.

The enzyme catalyses RNA(n) + a ribonucleoside 5'-triphosphate = RNA(n+1) + diphosphate. Functionally, DNA-dependent RNA polymerase catalyzes the transcription of DNA into RNA using the four ribonucleoside triphosphates as substrates. The polypeptide is DNA-directed RNA polymerase subunit beta (Aliarcobacter butzleri (strain RM4018) (Arcobacter butzleri)).